Here is a 144-residue protein sequence, read N- to C-terminus: MKLNNLSPAPGSKHAEKRVGRGIGSGLGKTGGRGHKGQKSRSGGSVKPGFEGGQMPLQRRLPKYGFTSAKSLVSEEVRLAELAKVDGEIVDLESLKKANVLKDNTQYAKVILSGELNKAVTVRGLKVTKGARDAIAAAGGKVED.

A disordered region spans residues 1-58 (MKLNNLSPAPGSKHAEKRVGRGIGSGLGKTGGRGHKGQKSRSGGSVKPGFEGGQMPLQ). Residues 21 to 31 (RGIGSGLGKTG) show a composition bias toward gly residues.

The protein belongs to the universal ribosomal protein uL15 family. In terms of assembly, part of the 50S ribosomal subunit.

Functionally, binds to the 23S rRNA. The protein is Large ribosomal subunit protein uL15 of Chromohalobacter salexigens (strain ATCC BAA-138 / DSM 3043 / CIP 106854 / NCIMB 13768 / 1H11).